We begin with the raw amino-acid sequence, 27 residues long: Potassium channel toxin kappa-KTx 2.2 (27 aa).

Cystine bridges form between Cys3/Cys21 and Cys7/Cys17.

The protein belongs to the short scorpion toxin superfamily. Potassium channel inhibitor kappa-KTx family. Kappa-KTx 2 subfamily. As to expression, expressed by the venom gland.

It is found in the secreted. Its function is as follows. OmTx1 decreases the amplitude of the potassium current of the rat channels Kv1.1/KCNA1 by 17% and Kv1.2/KCNA2 by 12% as well as human Kv1.3/KCNA3 by 24%. OmTx2 decreases the amplitude of the potassium current of the rat channels Kv1.1/KCNA1 by 8% and Kv1.2/KCNA2 by 10% as well as human Kv1.3/KCNA3 by 36%. Also alters glucose-induced insulin release from pancreatic islets. The polypeptide is Potassium channel toxin kappa-KTx 2.2 (Opisthacanthus madagascariensis (Scorpion)).